The primary structure comprises 205 residues: Large ribosomal subunit protein bL25 (205 aa).

The tract at residues 185-205 (PAGAVSEAAEGGEAAGETPAA) is disordered. Positions 186–205 (AGAVSEAAEGGEAAGETPAA) are enriched in low complexity.

Belongs to the bacterial ribosomal protein bL25 family. CTC subfamily. In terms of assembly, part of the 50S ribosomal subunit; part of the 5S rRNA/L5/L18/L25 subcomplex. Contacts the 5S rRNA. Binds to the 5S rRNA independently of L5 and L18.

In terms of biological role, this is one of the proteins that binds to the 5S RNA in the ribosome where it forms part of the central protuberance. This is Large ribosomal subunit protein bL25 from Cupriavidus taiwanensis (strain DSM 17343 / BCRC 17206 / CCUG 44338 / CIP 107171 / LMG 19424 / R1) (Ralstonia taiwanensis (strain LMG 19424)).